The sequence spans 473 residues: tRNA-2-methylthio-N(6)-dimethylallyladenosine synthase (473 aa).

The 118-residue stretch at 3–120 (MKLHVKTWGC…LPEMIKEVQE (118 aa)) folds into the MTTase N-terminal domain. Residues C12, C49, C83, C157, C161, and C164 each contribute to the [4Fe-4S] cluster site. The Radical SAM core domain maps to 143-375 (KADGATAFVS…QDRIQQQSQG (233 aa)). One can recognise a TRAM domain in the interval 378–441 (RKMVGSVQRI…TNSIRGKFIR (64 aa)).

It belongs to the methylthiotransferase family. MiaB subfamily. Monomer. It depends on [4Fe-4S] cluster as a cofactor.

It is found in the cytoplasm. The catalysed reaction is N(6)-dimethylallyladenosine(37) in tRNA + (sulfur carrier)-SH + AH2 + 2 S-adenosyl-L-methionine = 2-methylsulfanyl-N(6)-dimethylallyladenosine(37) in tRNA + (sulfur carrier)-H + 5'-deoxyadenosine + L-methionine + A + S-adenosyl-L-homocysteine + 2 H(+). In terms of biological role, catalyzes the methylthiolation of N6-(dimethylallyl)adenosine (i(6)A), leading to the formation of 2-methylthio-N6-(dimethylallyl)adenosine (ms(2)i(6)A) at position 37 in tRNAs that read codons beginning with uridine. In Psychromonas ingrahamii (strain DSM 17664 / CCUG 51855 / 37), this protein is tRNA-2-methylthio-N(6)-dimethylallyladenosine synthase.